Here is a 417-residue protein sequence, read N- to C-terminus: Gamma-glutamyl phosphate reductase (417 aa).

It belongs to the gamma-glutamyl phosphate reductase family.

Its subcellular location is the cytoplasm. The enzyme catalyses L-glutamate 5-semialdehyde + phosphate + NADP(+) = L-glutamyl 5-phosphate + NADPH + H(+). Its pathway is amino-acid biosynthesis; L-proline biosynthesis; L-glutamate 5-semialdehyde from L-glutamate: step 2/2. Its function is as follows. Catalyzes the NADPH-dependent reduction of L-glutamate 5-phosphate into L-glutamate 5-semialdehyde and phosphate. The product spontaneously undergoes cyclization to form 1-pyrroline-5-carboxylate. The protein is Gamma-glutamyl phosphate reductase of Aeromonas salmonicida (strain A449).